We begin with the raw amino-acid sequence, 129 residues long: Large ribosomal subunit protein bL17 (129 aa).

Belongs to the bacterial ribosomal protein bL17 family. As to quaternary structure, part of the 50S ribosomal subunit. Contacts protein L32.

This is Large ribosomal subunit protein bL17 from Buchnera aphidicola subsp. Baizongia pistaciae (strain Bp).